A 318-amino-acid chain; its full sequence is Glycine--tRNA ligase alpha subunit (318 aa).

Belongs to the class-II aminoacyl-tRNA synthetase family. Tetramer of two alpha and two beta subunits.

The protein resides in the cytoplasm. It catalyses the reaction tRNA(Gly) + glycine + ATP = glycyl-tRNA(Gly) + AMP + diphosphate. This Chelativorans sp. (strain BNC1) protein is Glycine--tRNA ligase alpha subunit.